A 164-amino-acid chain; its full sequence is uncharacterized protein (164 aa).

The signal sequence occupies residues 1 to 25; sequence MMKTVKHLLCCAIAASALISTGVHA.

This is an uncharacterized protein from Escherichia coli (strain K12).